The following is a 360-amino-acid chain: GTP 3',8-cyclase 2 (360 aa).

Positions 33–259 constitute a Radical SAM core domain; the sequence is TFGRVANDLR…PDPAPRGSAP (227 aa). Residue arginine 42 participates in GTP binding. Residues cysteine 49 and cysteine 53 each coordinate [4Fe-4S] cluster. Residue tyrosine 55 coordinates S-adenosyl-L-methionine. Cysteine 56 contributes to the [4Fe-4S] cluster binding site. Residue arginine 93 coordinates GTP. Glycine 97 lines the S-adenosyl-L-methionine pocket. Residue threonine 124 participates in GTP binding. Serine 148 contacts S-adenosyl-L-methionine. Position 185 (lysine 185) interacts with GTP. Methionine 219 is an S-adenosyl-L-methionine binding site. Residues cysteine 287 and cysteine 290 each contribute to the [4Fe-4S] cluster site. 292 to 294 is a GTP binding site; that stretch reads RTR. Cysteine 304 is a binding site for [4Fe-4S] cluster.

The protein belongs to the radical SAM superfamily. MoaA family. Monomer and homodimer. The cofactor is [4Fe-4S] cluster.

The enzyme catalyses GTP + AH2 + S-adenosyl-L-methionine = (8S)-3',8-cyclo-7,8-dihydroguanosine 5'-triphosphate + 5'-deoxyadenosine + L-methionine + A + H(+). It functions in the pathway cofactor biosynthesis; molybdopterin biosynthesis. Catalyzes the cyclization of GTP to (8S)-3',8-cyclo-7,8-dihydroguanosine 5'-triphosphate. The chain is GTP 3',8-cyclase 2 from Mycobacterium bovis (strain ATCC BAA-935 / AF2122/97).